A 256-amino-acid chain; its full sequence is 6-carboxyhexanoate--CoA ligase (256 aa).

It belongs to the BioW family. As to quaternary structure, homodimer. Mg(2+) is required as a cofactor.

The enzyme catalyses heptanedioate + ATP + CoA = 6-carboxyhexanoyl-CoA + AMP + diphosphate. It functions in the pathway metabolic intermediate metabolism; pimeloyl-CoA biosynthesis; pimeloyl-CoA from pimelate: step 1/1. Catalyzes the transformation of pimelate into pimeloyl-CoA with concomitant hydrolysis of ATP to AMP. In Methanobrevibacter ruminantium (strain ATCC 35063 / DSM 1093 / JCM 13430 / OCM 146 / M1) (Methanobacterium ruminantium), this protein is 6-carboxyhexanoate--CoA ligase.